The sequence spans 453 residues: Cytochrome P450 monooxygenase PC-20 (453 aa).

2 helical membrane-spanning segments follow: residues 5-25 and 49-69; these read LGPFRTFTLLTVGLLLSLCVI and LGVVLAEILASPEGFFHLFCV. C387 contributes to the heme binding site.

This sequence belongs to the cytochrome P450 family. The cofactor is heme.

Its subcellular location is the membrane. Its pathway is secondary metabolite biosynthesis. In terms of biological role, cytochrome P450 monooxygenase; part of the gene cluster that mediates the biosynthesis of the indole diterpenes penitrems. The geranylgeranyl diphosphate (GGPP) synthase penG catalyzes the first step in penitrem biosynthesis via conversion of farnesyl pyrophosphate and isopentyl pyrophosphate into geranylgeranyl pyrophosphate (GGPP). Condensation of indole-3-glycerol phosphate with GGPP by the prenyl transferase penC then forms 3-geranylgeranylindole (3-GGI). Epoxidation by the FAD-dependent monooxygenase penM leads to a epoxidized-GGI that is substrate of the terpene cyclase penB for cyclization to yield paspaline. Paspaline is subsequently converted to 13-desoxypaxilline by the cytochrome P450 monooxygenase penP, the latter being then converted to paxilline by the cytochrome P450 monooxygenase penQ. Paxilline is converted to beta-paxitriol via C-10 ketoreduction by the short-chain dehydrogenase PC-15 which can be monoprenylated at the C-20 by the indole diterpene prenyltransferase penD. A two-step elimination (acetylation and elimination) process performed by the O-acetyltransferase PC-16 and the P.simplicissimum ptmI-ortholog not yet identified in P.crustosum, leads to the production of the prenylated form of penijanthine. The FAD-linked oxidoreductase ptmO then converts the prenylated form of penijanthine into PC-M5 which is in turn transformed into PC-M4 by the aromatic dimethylallyltransferase PC-22. A series of oxidation steps involving 4 cytochrome P450 monooxygenases (PC-21, PC-05, PC-23, PC-20) and a FAD-dependent monooxygenase (PC-14) are required for the transformation of PC-M4 to penitrems A and E. Synthesis of these final products is proposed to proceed via penitrems D and C (PC-21, PC-05, PC-14) and penitrems B and F (PC-21, PC-05, PC-14, PC-23). This is Cytochrome P450 monooxygenase PC-20 from Penicillium crustosum (Blue mold fungus).